Consider the following 75-residue polypeptide: Beta-defensin 30 (75 aa).

Positions 1–22 (MGSLQLTLVLFVLLSYVPPVRS) are cleaved as a signal peptide. Cystine bridges form between cysteine 35/cysteine 62, cysteine 42/cysteine 56, and cysteine 46/cysteine 63.

Belongs to the beta-defensin family.

It localises to the secreted. In terms of biological role, has antibacterial activity. The chain is Beta-defensin 30 (Defb30) from Mus musculus (Mouse).